The sequence spans 333 residues: Torsin-1A (333 aa).

Positions 1 to 20 are cleaved as a signal peptide; that stretch reads MKLGRAALALLLLAPCVVRA. Positions 92-252 are interaction with SNAPIN; sequence KPKKPLTLSL…VSVFNNKNSG (161 aa). Residue 103-110 coordinates ATP; sequence GWTGTGKN. N144 and N159 each carry an N-linked (GlcNAc...) asparagine glycan. An interaction with KLC1 region spans residues 252-333; it reads GFWHSSLIDR…FTKLDYYLDD (82 aa). The segment at 313–333 is interaction with SYNE3; it reads KVFSDKGCKTVFTKLDYYLDD.

This sequence belongs to the ClpA/ClpB family. Torsin subfamily. In terms of assembly, homohexamer. Interacts with TOR1B; the interaction may be specific of neural tissues. Interacts (ATP-bound) with TOR1AIP1 and TOR1AIP2; the interactions induce ATPase activity. Interacts with KLHL14; preferentially when ATP-free. Interacts with KLC1 (via TPR repeats); the interaction associates TOR1A with the kinesin oligomeric complex. Interacts with COPS4; the interaction associates TOR1A with the CSN complex. Interacts with SNAPIN; the interaction is direct and associates SNAPIN with the CSN complex. Interacts with STON2. Interacts (ATP-bound) with SYNE3 (via KASH domain); the interaction is required for SYNE3 nuclear envelope localization. Interacts with VIM; the interaction associates TOR1A with the cytoskeleton. Interacts with PLEC. Interacts (ATP-bound) with SLC6A3; regulates SLC6A3 transport to the plasma membrane. In terms of processing, N-glycosylated. As to expression, widely expressed (at protein level).

The protein resides in the endoplasmic reticulum lumen. The protein localises to the nucleus membrane. Its subcellular location is the cell projection. It is found in the growth cone. It localises to the cytoplasmic vesicle membrane. The protein resides in the synapse. The protein localises to the synaptosome. Its subcellular location is the cytoplasm. It is found in the cytoskeleton. It localises to the cytoplasmic vesicle. The protein resides in the secretory vesicle. The protein localises to the synaptic vesicle. The catalysed reaction is ATP + H2O = ADP + phosphate + H(+). In terms of biological role, protein with chaperone functions important for the control of protein folding, processing, stability and localization as well as for the reduction of misfolded protein aggregates. Involved in the regulation of synaptic vesicle recycling, controls STON2 protein stability in collaboration with the COP9 signalosome complex (CSN). In the nucleus, may link the cytoskeleton with the nuclear envelope, this mechanism seems to be crucial for the control of nuclear polarity, cell movement and, specifically in neurons, nuclear envelope integrity. Participates in the cellular trafficking and may regulate the subcellular location of multipass membrane proteins such as the dopamine transporter SLC6A3, leading to the modulation of dopamine neurotransmission. In the endoplasmic reticulum, plays a role in the quality control of protein folding by increasing clearance of misfolded proteins such as SGCE variants or holding them in an intermediate state for proper refolding. May have a redundant function with TOR1B in non-neural tissues. In Mus musculus (Mouse), this protein is Torsin-1A (Tor1a).